Reading from the N-terminus, the 503-residue chain is ATP synthase subunit alpha, chloroplastic (503 aa).

170-177 (GDRQTGKT) contacts ATP.

It belongs to the ATPase alpha/beta chains family. As to quaternary structure, F-type ATPases have 2 components, CF(1) - the catalytic core - and CF(0) - the membrane proton channel. CF(1) has five subunits: alpha(3), beta(3), gamma(1), delta(1), epsilon(1). CF(0) has four main subunits: a, b, b' and c.

It is found in the plastid. It localises to the chloroplast thylakoid membrane. It catalyses the reaction ATP + H2O + 4 H(+)(in) = ADP + phosphate + 5 H(+)(out). Functionally, produces ATP from ADP in the presence of a proton gradient across the membrane. The alpha chain is a regulatory subunit. This chain is ATP synthase subunit alpha, chloroplastic, found in Trieres chinensis (Marine centric diatom).